The primary structure comprises 343 residues: Mas-related G-protein coupled receptor member F (343 aa).

At 1 to 44 (MAGNCSWEAHPGNRNKMCPGLSEAPELYSRGFLTIEQIAMLPPP) the chain is on the extracellular side. Asparagine 4 carries N-linked (GlcNAc...) asparagine glycosylation. A helical membrane pass occupies residues 45–66 (AVMNYIFLLLCLCGLVGNGLVL). The Cytoplasmic portion of the chain corresponds to 67-82 (WFFGFSIKRNPFSIYF). A helical transmembrane segment spans residues 83 to 104 (LHLASADVGYLFSKAVFSILNT). The Extracellular segment spans residues 105–123 (GGFLGTFADYIRSVCRVLG). A helical transmembrane segment spans residues 124 to 144 (LCMFLTGVSLLPAVSAERCAS). Residues 145–160 (VIFPAWYWRRRPKRLS) lie on the Cytoplasmic side of the membrane. A helical membrane pass occupies residues 161 to 181 (AVVCALLWVLSLLVTCLHNYF). Residues 182-198 (CVFLGRGAPGAACRHMD) lie on the Extracellular side of the membrane. Residues 199–220 (IFLGILLFLLCCPLMVLPCLAL) traverse the membrane as a helical segment. Topologically, residues 221–241 (ILHVECRARRRQRSAKLNHVI) are cytoplasmic. A helical transmembrane segment spans residues 242 to 263 (LAMVSVFLVSSIYLGIDWFLFW). At 264–273 (VFQIPAPFPE) the chain is on the extracellular side. The helical transmembrane segment at 274 to 294 (YVTDLCICINSSAKPIVYFLA) threads the bilayer. The Cytoplasmic portion of the chain corresponds to 295–343 (GRDKSQRLWEPLRVVFQRALRDGAELGEAGGSTPNTVTMEMQCPPGNAS). The disordered stretch occupies residues 320–343 (LGEAGGSTPNTVTMEMQCPPGNAS).

This sequence belongs to the G-protein coupled receptor 1 family. Mas subfamily.

It is found in the cell membrane. In terms of biological role, orphan receptor. May bind to a neuropeptide and may regulate nociceptor function and/or development, including the sensation or modulation of pain. This is Mas-related G-protein coupled receptor member F (MRGPRF) from Homo sapiens (Human).